A 291-amino-acid polypeptide reads, in one-letter code: GTP-binding protein RHO4 (291 aa).

The segment covering 14–31 (GNESNIVSQGSPSSSNLP) has biased composition (polar residues). Positions 14–45 (GNESNIVSQGSPSSSNLPESPGTLDEKNLPRL) are disordered. 79–86 (GDGAVGKT) serves as a coordination point for GTP. Residues 101–109 (YIPTIFENY) carry the Effector region motif. GTP-binding positions include 127–131 (DTAGQ) and 185–188 (LKSD). The tract at residues 250–273 (THTIKNPFKRNTTRSDIDSSTGDT) is disordered. Phosphoserine occurs at positions 264, 268, and 276. Cys-288 is modified (cysteine methyl ester). Cys-288 carries the S-farnesyl cysteine lipid modification. Residues 289-291 (IIM) constitute a propeptide, removed in mature form.

The protein belongs to the small GTPase superfamily. Rho family. As to quaternary structure, interacts with BEM4.

The protein resides in the cell membrane. The catalysed reaction is GTP + H2O = GDP + phosphate + H(+). Functionally, plays an important role in cell growth. Required to keep the uninucleated state. May be involved in the organization of the cytoskeleton which affects microtubule functions. Most likely RHO3 and RHO4 of S.cerevisiae regulate partially overlapping but different pathways. The sequence is that of GTP-binding protein RHO4 (RHO4) from Saccharomyces cerevisiae (strain ATCC 204508 / S288c) (Baker's yeast).